Consider the following 230-residue polypeptide: 7-cyano-7-deazaguanine synthase (230 aa).

Residue 8–18 coordinates ATP; it reads LSGGMDSAVVT. 4 residues coordinate Zn(2+): cysteine 186, cysteine 196, cysteine 199, and cysteine 202.

It belongs to the QueC family. It depends on Zn(2+) as a cofactor.

It catalyses the reaction 7-carboxy-7-deazaguanine + NH4(+) + ATP = 7-cyano-7-deazaguanine + ADP + phosphate + H2O + H(+). It functions in the pathway purine metabolism; 7-cyano-7-deazaguanine biosynthesis. In terms of biological role, catalyzes the ATP-dependent conversion of 7-carboxy-7-deazaguanine (CDG) to 7-cyano-7-deazaguanine (preQ(0)). The protein is 7-cyano-7-deazaguanine synthase of Xylella fastidiosa (strain M12).